The chain runs to 192 residues: Ribosome maturation factor RimM (192 aa).

Residues 97-172 (EDEYYLADLI…VVLADPPALV (76 aa)) enclose the PRC barrel domain. The tract at residues 168-192 (PPALVGEPEGPESPAEDDDGERHYD) is disordered.

It belongs to the RimM family. As to quaternary structure, binds ribosomal protein uS19.

It localises to the cytoplasm. Its function is as follows. An accessory protein needed during the final step in the assembly of 30S ribosomal subunit, possibly for assembly of the head region. Essential for efficient processing of 16S rRNA. May be needed both before and after RbfA during the maturation of 16S rRNA. It has affinity for free ribosomal 30S subunits but not for 70S ribosomes. In Caulobacter sp. (strain K31), this protein is Ribosome maturation factor RimM.